A 214-amino-acid chain; its full sequence is Germin-like protein (214 aa).

The signal sequence occupies residues 1–22 (MVMMRIFFFLFLLAFPVFTANA). Cys28 and Cys44 are joined by a disulfide. The 147-residue stretch at 58–204 (SGLAKPGNTT…TTCLDEATIK (147 aa)) folds into the Cupin type-1 domain. Positions 106, 108, and 113 each coordinate Mn(2+).

The protein belongs to the germin family. As to quaternary structure, oligomer (believed to be a pentamer but probably hexamer). In terms of tissue distribution, cotyledons and leaves.

The protein localises to the secreted. Its subcellular location is the extracellular space. The protein resides in the apoplast. This is Germin-like protein (GLP) from Ipomoea nil (Japanese morning glory).